Here is a 1040-residue protein sequence, read N- to C-terminus: Contactin-2 (1040 aa).

An N-terminal signal peptide occupies residues 1 to 30 (MGAPARKRASLLLLLLATMALVSSPGWSFS). Ig-like C2-type domains lie at 39-130 (PVFE…AVLR), 135-224 (QEFS…SVFS), 241-324 (PSIK…GRII), 329-413 (PEWL…AELA), 419-506 (PDFR…GILS), and 511-605 (TKIT…ATVL). 4 disulfides stabilise this stretch: Cys-63/Cys-113, Cys-157/Cys-209, Cys-263/Cys-308, and Cys-350/Cys-397. N-linked (GlcNAc...) asparagine glycans are attached at residues Asn-78, Asn-200, and Asn-206. Residues Asn-463, Asn-479, Asn-500, and Asn-527 are each glycosylated (N-linked (GlcNAc...) asparagine). Fibronectin type-III domains follow at residues 612–710 (PPGG…TKEA), 715–812 (APSG…SAEE), 817–913 (APAK…MKPP), and 917–1008 (PPGN…NGGT). An N-linked (GlcNAc...) asparagine glycan is attached at Asn-777. A Cell attachment site motif is present at residues 796 to 798 (RGD). N-linked (GlcNAc...) asparagine glycans are attached at residues Asn-832, Asn-920, and Asn-942. The disordered stretch occupies residues 897 to 922 (GTGPASPSADAMTMKPPPRRPPGNIS). Ser-1014 carries GPI-anchor amidated serine lipidation. The propeptide at 1015-1040 (SAVRPAHPGPVFSCMVILMLAGCQRL) is removed in mature form.

Belongs to the immunoglobulin superfamily. Contactin family.

It localises to the cell membrane. Its function is as follows. In conjunction with another transmembrane protein, CNTNAP2, contributes to the organization of axonal domains at nodes of Ranvier by maintaining voltage-gated potassium channels at the juxtaparanodal region. In Mus musculus (Mouse), this protein is Contactin-2 (Cntn2).